The chain runs to 229 residues: Enolase-phosphatase E1 (229 aa).

Residues 207–229 (RDPASHHPQVQRFDDIHPEQIPA) form a disordered region. Residues 218-229 (RFDDIHPEQIPA) show a composition bias toward basic and acidic residues.

It belongs to the HAD-like hydrolase superfamily. MasA/MtnC family. In terms of assembly, monomer. It depends on Mg(2+) as a cofactor.

The catalysed reaction is 5-methylsulfanyl-2,3-dioxopentyl phosphate + H2O = 1,2-dihydroxy-5-(methylsulfanyl)pent-1-en-3-one + phosphate. The protein operates within amino-acid biosynthesis; L-methionine biosynthesis via salvage pathway; L-methionine from S-methyl-5-thio-alpha-D-ribose 1-phosphate: step 3/6. It functions in the pathway amino-acid biosynthesis; L-methionine biosynthesis via salvage pathway; L-methionine from S-methyl-5-thio-alpha-D-ribose 1-phosphate: step 4/6. In terms of biological role, bifunctional enzyme that catalyzes the enolization of 2,3-diketo-5-methylthiopentyl-1-phosphate (DK-MTP-1-P) into the intermediate 2-hydroxy-3-keto-5-methylthiopentenyl-1-phosphate (HK-MTPenyl-1-P), which is then dephosphorylated to form the acireductone 1,2-dihydroxy-3-keto-5-methylthiopentene (DHK-MTPene). This Klebsiella pneumoniae (strain 342) protein is Enolase-phosphatase E1.